We begin with the raw amino-acid sequence, 227 residues long: Agamous-like MADS-box protein AGL8 homolog (227 aa).

In terms of domain architecture, MADS-box spans 3 to 57 (RGRVQLKRIENKINRQVTFSKRRSGLLKKAHEISVLCDAEVGLIVFSTKGKLFEY). In terms of domain architecture, K-box spans 88-178 (PVSWTLEHRK…SKKVKEREKS (91 aa)).

In terms of tissue distribution, flower specific.

The protein localises to the nucleus. Functionally, probable transcription factor. This Solanum lycopersicum (Tomato) protein is Agamous-like MADS-box protein AGL8 homolog (TDR4).